The primary structure comprises 80 residues: Growth factor (80 aa).

The N-terminal stretch at 1 to 19 (MATRNLVASLLCIMYAVHA) is a signal peptide. The region spanning 29–73 (HVKVCNHDYENYCLNNGTCFTIALDNVSITPFCVCRINYEGSRCQ) is the EGF-like domain. Disulfide bonds link C33–C47, C41–C61, and C63–C72. N-linked (GlcNAc...) asparagine; by host glycosylation is found at N44 and N54.

The protein resides in the secreted. The chain is Growth factor from Oryctolagus cuniculus (Rabbit).